A 521-amino-acid chain; its full sequence is Cysteine protease atg-4.2 (521 aa).

The span at 90-100 (MMGSIRPSSSS) shows a compositional bias: low complexity. The tract at residues 90-109 (MMGSIRPSSSSQDVHSTGEI) is disordered. Catalysis depends on C203, which acts as the Nucleophile. Residues D394 and H396 contribute to the active site. Positions 499–521 (PSYEREVSETEQAQADKHGFEML) are disordered.

This sequence belongs to the peptidase C54 family.

The protein resides in the cytoplasm. It carries out the reaction [protein]-C-terminal L-amino acid-glycyl-phosphatidylethanolamide + H2O = [protein]-C-terminal L-amino acid-glycine + a 1,2-diacyl-sn-glycero-3-phosphoethanolamine. Its function is as follows. Cysteine protease required for autophagy. Cleaves the C-terminal amino acid of ATG8 family proteins lgg-1, to reveal a C-terminal glycine. Exposure of the glycine at the C-terminus is essential for ATG8 proteins conjugation to phosphatidylethanolamine (PE) and insertion to membranes, which is necessary for autophagy. Its cleavage activity is functionally redundant to atg-4.1, but it cleaves lgg-1 precursors less efficiently than atg-4.1. In contrast to atg-4.1, plays a more significant role in the later phases of autophagy and in addition has a role in autophagosome maturation. Acts redundantly with atg-4.1 to promote the lgg-1 delipidation to release the protein from membranes, which facilitates multiple events during macroautophagy. Regulates the accumulation of autophagic structures in neurons and is specifically, required for the maturation and elimination of autophagosomes from the synaptic region of AIY interneurons. This Caenorhabditis elegans protein is Cysteine protease atg-4.2.